The chain runs to 417 residues: Lissencephaly-1 homolog (417 aa).

The LisH domain occupies 7–39 (QKEELNGAILDYFDSSGYKLTSTEFTKETNIEL). Positions 52 to 80 (TSVIRLQKKVMDLEAKVSQLEEELNNGGR) form a coiled coil. The segment at 72-93 (EEELNNGGRGPARRGKEDALPR) is disordered. WD repeat units lie at residues 102–143 (GHRN…RTLK), 144–185 (GHTN…KTLH), 186–225 (GHDH…CTKT), 228–267 (GHED…CLLT), 270–339 (EHSH…CLQT), 342–383 (GHDN…KTIN), and 385–417 (AHSH…WKLG).

This sequence belongs to the WD repeat LIS1/nudF family.

The protein resides in the cytoplasm. Its subcellular location is the cytoskeleton. It localises to the microtubule organizing center. It is found in the centrosome. Positively regulates the activity of the minus-end directed microtubule motor protein dynein. May enhance dynein-mediated microtubule sliding by targeting dynein to the microtubule plus end. Required for several dynein- and microtubule-dependent processes. This is Lissencephaly-1 homolog from Heterostelium pallidum (strain ATCC 26659 / Pp 5 / PN500) (Cellular slime mold).